Consider the following 159-residue polypeptide: Probable epoxidase scpX (159 aa).

An N-terminal signal peptide occupies residues 1-25; sequence MATLIRLLRLLPVASSSAVLMFALD. 2 helical membrane passes run 59–79 and 96–116; these read WVLI…LFIS and LLFS…IAAI. Residues N124 and N136 are each glycosylated (N-linked (GlcNAc...) asparagine). The helical transmembrane segment at 139-159 threads the bilayer; it reads RALLTDLPAWLCFIAAALKAL.

Belongs to the epoxidase xenD family.

The protein localises to the membrane. It participates in mycotoxin biosynthesis. Its function is as follows. Probable epoxidase; part of the gene scp cluster that mediates the biosynthesis of a hirsutellone-like compound that has still to be identified. In Mollisia scopiformis (Conifer needle endophyte fungus), this protein is Probable epoxidase scpX.